We begin with the raw amino-acid sequence, 151 residues long: Copper transporter 3 (151 aa).

2 helical membrane-spanning segments follow: residues 52–72 (LKMY…SECL) and 103–123 (YLVM…AMAG).

The protein belongs to the copper transporter (Ctr) (TC 1.A.56) family. SLC31A subfamily. Highly expressed in stems and at lower levels in leaves and flowers.

It localises to the membrane. Functionally, involved in the transport of copper. The protein is Copper transporter 3 (COPT3) of Arabidopsis thaliana (Mouse-ear cress).